We begin with the raw amino-acid sequence, 585 residues long: Probable multidrug resistance ABC transporter ATP-binding/permease protein YheI (585 aa).

The ABC transmembrane type-1 domain occupies 19-304 (YTIAIVLLLA…IGELINVMQR (286 aa)). 6 helical membrane-spanning segments follow: residues 21–41 (IAIV…KLLG), 57–77 (LLFY…MSYF), 127–147 (AVSL…MFMM), 149–169 (IFLT…IIPL), 249–269 (VKLL…FLVF), and 279–299 (VSFN…GELI). Positions 337 to 572 (IVFSHVSFTY…NGWYREQYER (236 aa)) constitute an ABC transporter domain. Residue 371–378 (GKTGSGKT) participates in ATP binding.

It belongs to the ABC transporter superfamily. As to quaternary structure, heterodimer composed of YheH and YheI.

The protein resides in the cell membrane. Its activity is regulated as follows. Inhibited by ortho-vanadate. Involved in the transport of four structurally unrelated drugs, including doxorubicin and mitoxantrone. Transmembrane domains (TMD) form a pore in the membrane and the ATP-binding domain (NBD) is responsible for energy generation. The sequence is that of Probable multidrug resistance ABC transporter ATP-binding/permease protein YheI (yheI) from Bacillus subtilis (strain 168).